Consider the following 682-residue polypeptide: T-box brain protein 1 (682 aa).

Disordered regions lie at residues 43 to 83 (TDNL…RSKL) and 108 to 127 (SQSS…FPYP). Residues 58 to 68 (GMTNQSDTDNF) show a composition bias toward polar residues. A compositionally biased stretch (low complexity) spans 108 to 122 (SQSSQPQSAATAPSA). A DNA-binding region (T-box) is located at residues 213 to 393 (LWLKFHRHQT…HNPFAKGFRD (181 aa)). Phosphothreonine is present on threonine 408. Serine 410 carries the post-translational modification Phosphoserine. 2 disordered regions span residues 447 to 483 (PGAG…SPQR) and 588 to 658 (GLAA…KSEV). Positions 462–472 (PHTNGLLSPQQ) are enriched in polar residues. Phosphoserine is present on serine 594. Residues 619–629 (SSIKSIDSSDS) are compositionally biased toward low complexity. The residue at position 641 (serine 641) is a Phosphoserine.

In terms of assembly, homodimer. Part of a complex containing CASK, TBR1 and TSPYL2; may modulate gene expression in response to neuronal synaptic activity. Interacts with FOXP2. Interacts with FOXP1. Interacts with BCL11A. Brain.

It localises to the nucleus. Transcriptional repressor involved in multiple aspects of cortical development, including neuronal migration, laminar and areal identity, and axonal projection. As transcriptional repressor of FEZF2, it blocks the formation of the corticospinal (CS) tract from layer 6 projection neurons, thereby restricting the origin of CS axons specifically to layer 5 neurons. The sequence is that of T-box brain protein 1 (TBR1) from Homo sapiens (Human).